The primary structure comprises 344 residues: Inositol 2-dehydrogenase/D-chiro-inositol 3-dehydrogenase (344 aa).

It belongs to the Gfo/Idh/MocA family. As to quaternary structure, homotetramer.

It catalyses the reaction myo-inositol + NAD(+) = scyllo-inosose + NADH + H(+). The catalysed reaction is 1D-chiro-inositol + NAD(+) = scyllo-inosine + NADH + H(+). It functions in the pathway polyol metabolism; myo-inositol degradation into acetyl-CoA; acetyl-CoA from myo-inositol: step 1/7. In terms of biological role, involved in the oxidation of myo-inositol (MI) and D-chiro-inositol (DCI) to 2-keto-myo-inositol (2KMI or 2-inosose) and 1-keto-D-chiro-inositol (1KDCI), respectively. Can also use D-glucose and D-xylose, and shows a trace of activity with D-ribose and D-fructose. The polypeptide is Inositol 2-dehydrogenase/D-chiro-inositol 3-dehydrogenase (iolG) (Bacillus subtilis (strain 168)).